The sequence spans 425 residues: Serine--tRNA ligase (425 aa).

Position 230–232 (230–232) interacts with L-serine; that stretch reads TAE. 261–263 provides a ligand contact to ATP; the sequence is RSE. E284 contacts L-serine. 348-351 is a binding site for ATP; sequence EISS. L-serine is bound at residue S384.

This sequence belongs to the class-II aminoacyl-tRNA synthetase family. Type-1 seryl-tRNA synthetase subfamily. In terms of assembly, homodimer. The tRNA molecule binds across the dimer.

The protein resides in the cytoplasm. The catalysed reaction is tRNA(Ser) + L-serine + ATP = L-seryl-tRNA(Ser) + AMP + diphosphate + H(+). The enzyme catalyses tRNA(Sec) + L-serine + ATP = L-seryl-tRNA(Sec) + AMP + diphosphate + H(+). Its pathway is aminoacyl-tRNA biosynthesis; selenocysteinyl-tRNA(Sec) biosynthesis; L-seryl-tRNA(Sec) from L-serine and tRNA(Sec): step 1/1. In terms of biological role, catalyzes the attachment of serine to tRNA(Ser). Is also able to aminoacylate tRNA(Sec) with serine, to form the misacylated tRNA L-seryl-tRNA(Sec), which will be further converted into selenocysteinyl-tRNA(Sec). The chain is Serine--tRNA ligase from Streptococcus equi subsp. zooepidemicus (strain MGCS10565).